The following is a 161-amino-acid chain: Nucleotide-binding protein Pfl01_4421 (161 aa).

Belongs to the YajQ family.

In terms of biological role, nucleotide-binding protein. The protein is Nucleotide-binding protein Pfl01_4421 of Pseudomonas fluorescens (strain Pf0-1).